A 285-amino-acid polypeptide reads, in one-letter code: Ubiquinone biosynthesis protein COQ4, mitochondrial (285 aa).

The transit peptide at 1-11 directs the protein to the mitochondrion; sequence MPPAVRQGMRT. Zn(2+)-binding residues include His-166, Asp-167, His-170, and Glu-182.

This sequence belongs to the COQ4 family. As to quaternary structure, component of a multi-subunit COQ enzyme complex, composed of at least COQ3, COQ4, COQ5, COQ6, COQ7 and COQ9. Requires Zn(2+) as cofactor.

The protein localises to the mitochondrion inner membrane. The catalysed reaction is a 4-hydroxy-3-methoxy-5-(all-trans-polyprenyl)benzoate + H(+) = a 2-methoxy-6-(all-trans-polyprenyl)phenol + CO2. Its pathway is cofactor biosynthesis; ubiquinone biosynthesis. In terms of biological role, lyase that catalyzes the C1-decarboxylation of 4-hydroxy-3-methoxy-5-(all-trans-polyprenyl)benzoic acid into 2-methoxy-6-(all-trans-polyprenyl)phenol during ubiquinone biosynthesis. This Paracoccidioides lutzii (strain ATCC MYA-826 / Pb01) (Paracoccidioides brasiliensis) protein is Ubiquinone biosynthesis protein COQ4, mitochondrial.